The following is a 645-amino-acid chain: DNA mismatch repair protein MutL (645 aa).

Belongs to the DNA mismatch repair MutL/HexB family.

In terms of biological role, this protein is involved in the repair of mismatches in DNA. It is required for dam-dependent methyl-directed DNA mismatch repair. May act as a 'molecular matchmaker', a protein that promotes the formation of a stable complex between two or more DNA-binding proteins in an ATP-dependent manner without itself being part of a final effector complex. The polypeptide is DNA mismatch repair protein MutL (Geobacillus thermodenitrificans (strain NG80-2)).